We begin with the raw amino-acid sequence, 134 residues long: Profilin-3 (134 aa).

A disulfide bridge links Cys13 with Cys118. The short motif at 84–100 (AVIRGKKGSGGITIKKT) is the Involved in PIP2 interaction element. Thr114 is modified (phosphothreonine).

This sequence belongs to the profilin family. Occurs in many kinds of cells as a complex with monomeric actin in a 1:1 ratio. Post-translationally, phosphorylated by MAP kinases.

The protein resides in the cytoplasm. It is found in the cytoskeleton. Binds to actin and affects the structure of the cytoskeleton. At high concentrations, profilin prevents the polymerization of actin, whereas it enhances it at low concentrations. The sequence is that of Profilin-3 from Olea europaea (Common olive).